The sequence spans 395 residues: Protein-arginine rhamnosyltransferase (395 aa).

DTDP-beta-L-rhamnose is bound by residues 19–22, Tyr-205, Gln-272, and 288–292; these read NYGD and RGEDS. Asp-22 (proton acceptor) is an active-site residue. Residue Glu-290 is part of the active site.

It belongs to the glycosyltransferase 104 family.

It carries out the reaction dTDP-beta-L-rhamnose + L-arginyl-[protein] = N(omega)-(alpha-L-rhamnosyl)-L-arginyl-[protein] + dTDP + H(+). In terms of biological role, protein-arginine rhamnosyltransferase that catalyzes the transfer of a single rhamnose to elongation factor P (EF-P) on 'Lys-32', a modification required for EF-P-dependent rescue of polyproline stalled ribosomes. This Shewanella oneidensis (strain ATCC 700550 / JCM 31522 / CIP 106686 / LMG 19005 / NCIMB 14063 / MR-1) protein is Protein-arginine rhamnosyltransferase.